Consider the following 298-residue polypeptide: Leucine-rich repeat-containing protein 55 (298 aa).

Residues 1-34 form the signal peptide; the sequence is MGDTWAQLPWPGPPHSALLLVFFLLAAGVMHSDA. One can recognise an LRRNT domain in the interval 35–65; that stretch reads GASCPVLCTCRNQVVDCSNQRLFSVPPDLPM. Disulfide bonds link cysteine 38/cysteine 44 and cysteine 42/cysteine 51. LRR repeat units lie at residues 66-87, 90-111, 114-135, 138-160, and 163-186; these read DTRNLSLAHNRIAAVPPGYLTC, ELRVLDLRNNSLMELPPGLFLH, RLAHLDLSYNNLSHVPADMFRE, GLVHIDLSHNPWLRRVHPQAFQG, and HLRDLDLSYGGLAFLSLEALEGLP. The LRRCT domain occupies 196–251; the sequence is NPWVCGCTMEPLLKWLRNRIQRCTADSQLAECRGPPEVEGAPLFSLTEESFKACHL. 2 disulfides stabilise this stretch: cysteine 200-cysteine 227 and cysteine 202-cysteine 249. Residues 259–279 form a helical membrane-spanning segment; it reads LFIAFVGFVVSIASVATNFLL.

In terms of assembly, interacts with KCNMA1.

The protein resides in the cell membrane. Functionally, auxiliary protein of the large-conductance, voltage and calcium-activated potassium channel (BK alpha). Modulates gating properties by producing a marked shift in the BK channel's voltage dependence of activation in the hyperpolarizing direction, and in the absence of calcium. The sequence is that of Leucine-rich repeat-containing protein 55 (Lrrc55) from Rattus norvegicus (Rat).